The chain runs to 246 residues: Ribonuclease PH (246 aa).

Phosphate is bound by residues Arg-91 and 129-131; that span reads GTR.

The protein belongs to the RNase PH family. As to quaternary structure, homohexameric ring arranged as a trimer of dimers.

The enzyme catalyses tRNA(n+1) + phosphate = tRNA(n) + a ribonucleoside 5'-diphosphate. In terms of biological role, phosphorolytic 3'-5' exoribonuclease that plays an important role in tRNA 3'-end maturation. Removes nucleotide residues following the 3'-CCA terminus of tRNAs; can also add nucleotides to the ends of RNA molecules by using nucleoside diphosphates as substrates, but this may not be physiologically important. Probably plays a role in initiation of 16S rRNA degradation (leading to ribosome degradation) during starvation. The polypeptide is Ribonuclease PH (Burkholderia vietnamiensis (strain G4 / LMG 22486) (Burkholderia cepacia (strain R1808))).